A 205-amino-acid chain; its full sequence is Small ribosomal subunit protein uS4 (205 aa).

A disordered region spans residues 18–49; that stretch reads NIWGRPKSPVNKREYGPGQHGQRRKGKLSDFG. Residues 94-157 form the S4 RNA-binding domain; that stretch reads RRLDTVVYRA…KQLALVLEAN (64 aa).

Belongs to the universal ribosomal protein uS4 family. In terms of assembly, part of the 30S ribosomal subunit. Contacts protein S5. The interaction surface between S4 and S5 is involved in control of translational fidelity.

Its function is as follows. One of the primary rRNA binding proteins, it binds directly to 16S rRNA where it nucleates assembly of the body of the 30S subunit. With S5 and S12 plays an important role in translational accuracy. The polypeptide is Small ribosomal subunit protein uS4 (Nitrobacter winogradskyi (strain ATCC 25391 / DSM 10237 / CIP 104748 / NCIMB 11846 / Nb-255)).